A 41-amino-acid chain; its full sequence is ORF3c protein (41 aa).

In terms of biological role, may play a role in host modulation. In Severe acute respiratory syndrome coronavirus 2 (2019-nCoV), this protein is ORF3c protein.